We begin with the raw amino-acid sequence, 290 residues long: Arginine and glutamate-rich protein 1 (290 aa).

Residues 1–10 are compositionally biased toward polar residues; the sequence is MGSRSRTPSP. Disordered regions lie at residues 1–137, 193–216, and 249–290; these read MGSR…AKEL, ERRR…KREE, and MDEE…PGAL. Residues 12–28 are compositionally biased toward basic residues; it reads GKRRHHKSKHKKRSKSH. Basic and acidic residues-rich tracts occupy residues 29-44 and 53-76; these read HDHE…DKSS and RERD…DYRH. 2 positions are modified to phosphoserine: serine 77 and serine 79. The segment covering 88–99 has biased composition (low complexity); the sequence is SSSSSDSQYSEQ. Residues 111–269 are a coiled coil; that stretch reads FKKLDEQNQM…QEKRVKEEQK (159 aa). The segment covering 124–137 has biased composition (basic and acidic residues); the sequence is RLAEMERQRRAKEL. A compositionally biased stretch (basic and acidic residues) spans 249–269; that stretch reads MDEERQRMRKEQEKRVKEEQK.

The protein belongs to the ARGLU1 family. Associates with the U1-snRNP complex; the interaction is enhanced by binding of Arglu1 to a stable intronic sequence RNA (sisRNA) produced from the Arglu1 gene by premature cleavage.

The protein resides in the nucleus. It is found in the nucleus speckle. In terms of biological role, post-transcriptional regulator of gene expression; modulates splicing and premature cleavage at cryptic polyadenylation sites of its own pre-mRNA through binding and regulation of the U1-snRNP complex. The sequence is that of Arginine and glutamate-rich protein 1 from Drosophila melanogaster (Fruit fly).